The chain runs to 150 residues: Cyanate hydratase (150 aa).

Catalysis depends on residues Arg-91, Glu-94, and Ser-117.

It belongs to the cyanase family.

It catalyses the reaction cyanate + hydrogencarbonate + 3 H(+) = NH4(+) + 2 CO2. In terms of biological role, catalyzes the reaction of cyanate with bicarbonate to produce ammonia and carbon dioxide. In Synechococcus sp. (strain CC9311), this protein is Cyanate hydratase.